Reading from the N-terminus, the 134-residue chain is MSYNRTLHSTTSILKMNSALQISCLLLVLGCLLGSGHGQSDAEFAAKSREISQIFGNPSVDKYTKVRNLPALVAFYEKYSSRLRLTAQEKKGIDNAIRQYRAQQNQKVDGVSAQGGTLFDILKKVVEVIIKVVV.

The first 38 residues, 1-38, serve as a signal peptide directing secretion; the sequence is MSYNRTLHSTTSILKMNSALQISCLLLVLGCLLGSGHG.

This sequence belongs to the Turandot family.

It localises to the secreted. A humoral factor that may play a role in stress tolerance. The chain is Protein Turandot E from Drosophila yakuba (Fruit fly).